We begin with the raw amino-acid sequence, 284 residues long: Probable tRNA-splicing endonuclease subunit sen34 (284 aa).

Catalysis depends on residues Y206, H214, and K245.

It belongs to the tRNA-intron endonuclease family. In terms of assembly, heterotetramer composed of sen2, sen15, sen34 and sen54. Interacts directly with sen15.

It catalyses the reaction pretRNA = a 3'-half-tRNA molecule with a 5'-OH end + a 5'-half-tRNA molecule with a 2',3'-cyclic phosphate end + an intron with a 2',3'-cyclic phosphate and a 5'-hydroxyl terminus.. In terms of biological role, constitutes one of the two catalytic subunit of the tRNA-splicing endonuclease complex, a complex responsible for identification and cleavage of the splice sites in pre-tRNA. It cleaves pre-tRNA at the 5'- and 3'-splice sites to release the intron. The products are an intron and two tRNA half-molecules bearing 2',3'-cyclic phosphate and 5'-OH termini. There are no conserved sequences at the splice sites, but the intron is invariably located at the same site in the gene, placing the splice sites an invariant distance from the constant structural features of the tRNA body. It probably carries the active site for 3'-splice site cleavage. The protein is Probable tRNA-splicing endonuclease subunit sen34 (sen34) of Schizosaccharomyces pombe (strain 972 / ATCC 24843) (Fission yeast).